The primary structure comprises 264 residues: Thiazole synthase (264 aa).

K104 serves as the catalytic Schiff-base intermediate with DXP. 1-deoxy-D-xylulose 5-phosphate-binding positions include G165, 191–192, and 213–214; these read AG and NT.

It belongs to the ThiG family. Homotetramer. Forms heterodimers with either ThiH or ThiS.

Its subcellular location is the cytoplasm. It carries out the reaction [ThiS sulfur-carrier protein]-C-terminal-Gly-aminoethanethioate + 2-iminoacetate + 1-deoxy-D-xylulose 5-phosphate = [ThiS sulfur-carrier protein]-C-terminal Gly-Gly + 2-[(2R,5Z)-2-carboxy-4-methylthiazol-5(2H)-ylidene]ethyl phosphate + 2 H2O + H(+). Its pathway is cofactor biosynthesis; thiamine diphosphate biosynthesis. Functionally, catalyzes the rearrangement of 1-deoxy-D-xylulose 5-phosphate (DXP) to produce the thiazole phosphate moiety of thiamine. Sulfur is provided by the thiocarboxylate moiety of the carrier protein ThiS. In vitro, sulfur can be provided by H(2)S. In Oleidesulfovibrio alaskensis (strain ATCC BAA-1058 / DSM 17464 / G20) (Desulfovibrio alaskensis), this protein is Thiazole synthase.